The primary structure comprises 274 residues: 2,3,4,5-tetrahydropyridine-2,6-dicarboxylate N-succinyltransferase (274 aa).

Substrate contacts are provided by Arg-104 and Asp-141.

This sequence belongs to the transferase hexapeptide repeat family. In terms of assembly, homotrimer.

It is found in the cytoplasm. The enzyme catalyses (S)-2,3,4,5-tetrahydrodipicolinate + succinyl-CoA + H2O = (S)-2-succinylamino-6-oxoheptanedioate + CoA. Its pathway is amino-acid biosynthesis; L-lysine biosynthesis via DAP pathway; LL-2,6-diaminopimelate from (S)-tetrahydrodipicolinate (succinylase route): step 1/3. This chain is 2,3,4,5-tetrahydropyridine-2,6-dicarboxylate N-succinyltransferase, found in Yersinia pestis.